Here is a 374-residue protein sequence, read N- to C-terminus: SH2 domain-containing protein 2A (374 aa).

Residues 116–207 (WFHGFITRRE…PYGEILTQPL (92 aa)) form the SH2 domain. Residues 213-232 (EPAGLSLRADSDSGSKRQDP) are disordered. Residues 221 to 232 (ADSDSGSKRQDP) are compositionally biased toward basic and acidic residues. Ser-237 bears the Phosphoserine mark. Residues 241–301 (QQGQAQASGH…QAPPINPIYQ (61 aa)) are disordered. Residues 256 to 266 (ASQQKATSQAS) are compositionally biased toward polar residues. The short motif at 267–273 (RPRPPIP) is the SH3-binding element. The segment covering 268–279 (PRPPIPAKPQLP) has biased composition (pro residues). Position 316 is a phosphoserine (Ser-316). 2 disordered regions span residues 321–340 (PSNIYAEVEGPSGTAPIGHP) and 353–374 (GQVREVQGKISSRSRAERGSPS).

Interacts with KDR. Interacts with p56-LCK, TXK and ITK. Post-translationally, phosphorylated on tyrosine residues upon TCR-stimulation. As to expression, expression limited to tissues of the immune system and, in particular, activated T-cells and natural killer cells. Expressed in the thymus, lymph node, and to a lesser extent, in the spleen and bone marrow. According to PubMed:10553045, also expressed in the lung.

It localises to the cytoplasm. It is found in the cell membrane. Functionally, could be a T-cell-specific adapter protein involved in the control of T-cell activation. May play a role in p56-LCK-mediated T-cell signaling. Could be involved in the regulation of responses to T-cell activation stimuli, specifically proliferation and lymphokine production. Interactions with ITK and TXK may provide important biochemical links of these two important kinases with other components in the T-cell activation machinery. This is SH2 domain-containing protein 2A (Sh2d2a) from Mus musculus (Mouse).